A 237-amino-acid chain; its full sequence is Cytosolic-abundant heat soluble protein 1 (237 aa).

2 stretches are compositionally biased toward basic and acidic residues: residues 1–17 (MPYE…KTEQ) and 91–105 (VDMR…EARR). Disordered regions lie at residues 1 to 35 (MPYE…VARE) and 85 to 105 (SGAS…EARR). A coiled-coil region spans residues 98 to 201 (KLAEEARRDA…KEALERSRMA (104 aa)). CAHS motif stretches follow at residues 132–150 (YRHQ…LEKQ) and 169–187 (QKRE…LDRE). The tract at residues 212–237 (AGHTVSGGTTVSSVDKVETVRERKHH) is disordered. Basic and acidic residues predominate over residues 226-237 (DKVETVRERKHH).

The protein belongs to the Cytosolic-abundant heat soluble protein (CAHS) family.

The protein localises to the cytoplasm. The protein resides in the nucleus. CAHS proteins are cytosolic heat soluble proteins that seem to contribute to the anhydrobiosis in tardigrades, but their specific mechanisms are yet to be identified. It is possible that protection during anhydrobiosis might occur via the stabilization of vitrifying small molecules such as sugars, but not via the direct glass transition of CAHS proteins themselves. In Ramazzottius varieornatus (Water bear), this protein is Cytosolic-abundant heat soluble protein 1.